Consider the following 98-residue polypeptide: Small ribosomal subunit protein uS19 (98 aa).

Belongs to the universal ribosomal protein uS19 family.

Functionally, protein S19 forms a complex with S13 that binds strongly to the 16S ribosomal RNA. The protein is Small ribosomal subunit protein uS19 of Chlorobaculum tepidum (strain ATCC 49652 / DSM 12025 / NBRC 103806 / TLS) (Chlorobium tepidum).